We begin with the raw amino-acid sequence, 379 residues long: Alcohol dehydrogenase 3 (379 aa).

8 residues coordinate Zn(2+): Cys-47, Thr-49, His-69, Cys-99, Cys-102, Cys-105, Cys-113, and Cys-177. An alcohol is bound by residues Thr-49 and His-69. Position 49 (Thr-49) interacts with NAD(+). NAD(+) is bound by residues 202–207 (GLGAVG), Asp-226, Lys-231, Thr-272, Val-295, 295–297 (VGV), Phe-322, and Arg-372.

It belongs to the zinc-containing alcohol dehydrogenase family. In terms of assembly, homodimer. Requires Zn(2+) as cofactor.

It is found in the cytoplasm. The catalysed reaction is a primary alcohol + NAD(+) = an aldehyde + NADH + H(+). It carries out the reaction a secondary alcohol + NAD(+) = a ketone + NADH + H(+). This Hordeum vulgare (Barley) protein is Alcohol dehydrogenase 3 (ADH3).